A 478-amino-acid chain; its full sequence is Cytochrome c-552 (478 aa).

The N-terminal stretch at 1–26 (MARKTLRARRFFSLIFPFFFITSVYA) is a signal peptide. Residue histidine 94 coordinates heme c. 3 residues coordinate heme: cysteine 122, cysteine 125, and lysine 126. Positions 160, 163, 164, 209, 212, and 213 each coordinate heme c. Positions 215, 216, 261, and 263 each coordinate Ca(2+). Tyrosine 216 contributes to the substrate binding site. Residue histidine 264 participates in substrate binding. 9 residues coordinate heme c: histidine 275, cysteine 282, cysteine 285, histidine 286, histidine 301, cysteine 314, cysteine 317, histidine 318, and histidine 393.

This sequence belongs to the cytochrome c-552 family. It depends on Ca(2+) as a cofactor. Requires heme c as cofactor.

It localises to the periplasm. It carries out the reaction 6 Fe(III)-[cytochrome c] + NH4(+) + 2 H2O = 6 Fe(II)-[cytochrome c] + nitrite + 8 H(+). It functions in the pathway nitrogen metabolism; nitrate reduction (assimilation). In terms of biological role, catalyzes the reduction of nitrite to ammonia, consuming six electrons in the process. This is Cytochrome c-552 from Salmonella agona (strain SL483).